Here is a 306-residue protein sequence, read N- to C-terminus: MTASLHIILDTDPGIDDAAAIAAALFAPQLDLQLITTVAGNVSVEKTTRNALQLLHFWNSDIPLAQGAATPLLRPLRDAAYVHGESGMEGYDFVDHQRQPLAKPAFIAIRDVLMNAPEPMTLVAIGPLTNIALLLMHYPECACNIRRLVLMGGSAGRGNFTPNAEFNIAVDPEAAALVFRSGLEIVMCGLDVTNQAMLSPDFLNKLPALNRTGKMLHSLFNHYRSGSMRTGVRMHDLCAIAWLVRPELFTLQSCFVAVETQGQYTAGTTVVDIEGRLGQPANAQVALALDVDGFRQWVAEVFAYAP.

H235 is an active-site residue.

The protein belongs to the IUNH family. RihC subfamily.

In terms of biological role, hydrolyzes both purine and pyrimidine ribonucleosides with a broad-substrate specificity. In Salmonella dublin (strain CT_02021853), this protein is Non-specific ribonucleoside hydrolase RihC.